We begin with the raw amino-acid sequence, 421 residues long: Glutamyl-tRNA reductase (421 aa).

Substrate is bound by residues 49–52, S109, 114–116, and Q120; these read TCNR and EPQ. C50 serves as the catalytic Nucleophile. Position 189-194 (189-194) interacts with NADP(+); the sequence is GAGKMS.

It belongs to the glutamyl-tRNA reductase family. As to quaternary structure, homodimer.

It carries out the reaction (S)-4-amino-5-oxopentanoate + tRNA(Glu) + NADP(+) = L-glutamyl-tRNA(Glu) + NADPH + H(+). The protein operates within porphyrin-containing compound metabolism; protoporphyrin-IX biosynthesis; 5-aminolevulinate from L-glutamyl-tRNA(Glu): step 1/2. In terms of biological role, catalyzes the NADPH-dependent reduction of glutamyl-tRNA(Glu) to glutamate 1-semialdehyde (GSA). The protein is Glutamyl-tRNA reductase of Solibacter usitatus (strain Ellin6076).